Consider the following 407-residue polypeptide: MSRYHTFTAADAVEYARQFGQVADPQALVTADEIGDGNLNLVFKIRDTAGISRVIVKQALPYVRCVGESWPLTLDRARIEAETLLTHSQFCPQHTVKVLHHDAELAVMVQEDLSDHHIWRHELIQGNYYPQAAEQLGEYLAQTLFHTSDFYQSAQAKKAAVSRYTNPELCQITEDLFFTDPYIDHERNNFDPVLLPEVLSLRQDKALKLAVASLKHRFLSQAEALLHGDIHSGSIFVADGRLKTIDAEFGFYGPIGFDIGTALGNLLLNYCGLPGLAGPRDAAAGREQRLKDVQTVWQTFAARFLALSQEKTQDPALATEGYATQFLQHVWRDAIGYCGSELIRRTIGLAHVADLDSIDDEEMRRACQRHALSLGRALILVAPHVDDVGGVVARIRQSPSSLTPQRC.

ATP-binding positions include Asn40, Lys57, and Glu111–Leu113. Asp229 is a binding site for substrate. An ATP-binding site is contributed by Asp246 to Glu248. Arg344 contacts substrate.

Belongs to the methylthioribose kinase family. Homodimer.

The catalysed reaction is 5-(methylsulfanyl)-D-ribose + ATP = 5-(methylsulfanyl)-alpha-D-ribose 1-phosphate + ADP + H(+). It functions in the pathway amino-acid biosynthesis; L-methionine biosynthesis via salvage pathway; S-methyl-5-thio-alpha-D-ribose 1-phosphate from S-methyl-5'-thioadenosine (hydrolase route): step 2/2. Catalyzes the phosphorylation of methylthioribose into methylthioribose-1-phosphate. This is Methylthioribose kinase from Yersinia pseudotuberculosis serotype IB (strain PB1/+).